Here is a 132-residue protein sequence, read N- to C-terminus: Small ribosomal subunit protein uS19 (132 aa).

It belongs to the universal ribosomal protein uS19 family. Part of the 30S ribosomal subunit.

In terms of biological role, protein S19 forms a complex with S13 that binds strongly to the 16S ribosomal RNA. The polypeptide is Small ribosomal subunit protein uS19 (Pyrococcus furiosus (strain ATCC 43587 / DSM 3638 / JCM 8422 / Vc1)).